The primary structure comprises 141 residues: uncharacterized protein (141 aa).

This is an uncharacterized protein from Caenorhabditis elegans.